The primary structure comprises 607 residues: Aspartate--tRNA(Asp/Asn) ligase (607 aa).

Glu168 contacts L-aspartate. Residues 192–195 (QLFK) are aspartate. Arg214 contacts L-aspartate. ATP contacts are provided by residues 214 to 216 (RDE) and Gln223. His449 contributes to the L-aspartate binding site. Glu483 contributes to the ATP binding site. Arg490 serves as a coordination point for L-aspartate. An ATP-binding site is contributed by 535-538 (GWDR). Residues 578 to 607 (LEAGVDARPKPEARAQAGTAGPAAPVADPT) are disordered. Over residues 580-590 (AGVDARPKPEA) the composition is skewed to basic and acidic residues. Low complexity predominate over residues 591–607 (RAQAGTAGPAAPVADPT).

This sequence belongs to the class-II aminoacyl-tRNA synthetase family. Type 1 subfamily. In terms of assembly, homodimer.

It localises to the cytoplasm. The catalysed reaction is tRNA(Asx) + L-aspartate + ATP = L-aspartyl-tRNA(Asx) + AMP + diphosphate. Functionally, aspartyl-tRNA synthetase with relaxed tRNA specificity since it is able to aspartylate not only its cognate tRNA(Asp) but also tRNA(Asn). Reaction proceeds in two steps: L-aspartate is first activated by ATP to form Asp-AMP and then transferred to the acceptor end of tRNA(Asp/Asn). The protein is Aspartate--tRNA(Asp/Asn) ligase of Salinispora tropica (strain ATCC BAA-916 / DSM 44818 / JCM 13857 / NBRC 105044 / CNB-440).